The sequence spans 145 residues: Bacilliredoxin ABC2045 (145 aa).

It belongs to the bacilliredoxin family.

This Shouchella clausii (strain KSM-K16) (Alkalihalobacillus clausii) protein is Bacilliredoxin ABC2045.